The primary structure comprises 863 residues: Paramyosin (863 aa).

The interval 1-18 is nonhelical region; sequence MSESHVKISRTIIRGTSP. The stretch at 19–836 forms a coiled coil; that stretch reads STVRLESRVR…ERTITIKRTI (818 aa). The interval 837–863 is nonhelical region; the sequence is GGPGSRAVSVVREINSVSRGNRATSIM.

This sequence belongs to the paramyosin family. As to quaternary structure, homodimer.

It is found in the cytoplasm. Its subcellular location is the myofibril. Its function is as follows. Paramyosin is a major structural component of many thick filaments isolated from invertebrate muscles. This is Paramyosin (PMY) from Taenia saginata (Beef tapeworm).